We begin with the raw amino-acid sequence, 239 residues long: Ribonuclease PH (239 aa).

Residues Arg-86 and 124–126 (GTR) each bind phosphate.

This sequence belongs to the RNase PH family. In terms of assembly, homohexameric ring arranged as a trimer of dimers.

It carries out the reaction tRNA(n+1) + phosphate = tRNA(n) + a ribonucleoside 5'-diphosphate. Functionally, phosphorolytic 3'-5' exoribonuclease that plays an important role in tRNA 3'-end maturation. Removes nucleotide residues following the 3'-CCA terminus of tRNAs; can also add nucleotides to the ends of RNA molecules by using nucleoside diphosphates as substrates, but this may not be physiologically important. Probably plays a role in initiation of 16S rRNA degradation (leading to ribosome degradation) during starvation. This Marinomonas sp. (strain MWYL1) protein is Ribonuclease PH.